The following is a 348-amino-acid chain: D-alanine--D-alanine ligase (348 aa).

An ATP-grasp domain is found at lysine 136–glutamate 344. Asparagine 171–glutamate 226 is a binding site for ATP. Positions 297, 311, and 313 each coordinate Mg(2+).

It belongs to the D-alanine--D-alanine ligase family. Mg(2+) serves as cofactor. Mn(2+) is required as a cofactor.

It is found in the cytoplasm. The catalysed reaction is 2 D-alanine + ATP = D-alanyl-D-alanine + ADP + phosphate + H(+). It participates in cell wall biogenesis; peptidoglycan biosynthesis. Functionally, cell wall formation. This chain is D-alanine--D-alanine ligase, found in Prochlorococcus marinus (strain NATL1A).